The following is a 705-amino-acid chain: Elongation factor G (705 aa).

The 283-residue stretch at 8 to 290 (ERYRNFGIMA…GVVHLLPSPA (283 aa)) folds into the tr-type G domain. GTP contacts are provided by residues 17-24 (AHIDAGKT), 88-92 (DTPGH), and 142-145 (NKMD). The disordered stretch occupies residues 290–309 (ADRPPVQGIDEDEKEDTRAA).

This sequence belongs to the TRAFAC class translation factor GTPase superfamily. Classic translation factor GTPase family. EF-G/EF-2 subfamily.

It is found in the cytoplasm. In terms of biological role, catalyzes the GTP-dependent ribosomal translocation step during translation elongation. During this step, the ribosome changes from the pre-translocational (PRE) to the post-translocational (POST) state as the newly formed A-site-bound peptidyl-tRNA and P-site-bound deacylated tRNA move to the P and E sites, respectively. Catalyzes the coordinated movement of the two tRNA molecules, the mRNA and conformational changes in the ribosome. This chain is Elongation factor G, found in Xanthomonas oryzae pv. oryzae (strain MAFF 311018).